A 313-amino-acid polypeptide reads, in one-letter code: Small ribosomal subunit protein uS2 (313 aa).

The span at 234–243 (DEEAKEEKTK) shows a compositional bias: basic and acidic residues. A disordered region spans residues 234-313 (DEEAKEEKTK…ASKAEAEEGK (80 aa)). A compositionally biased stretch (basic residues) spans 244 to 256 (AKTTAKKVVTKKA). Over residues 266 to 297 (AEKKSEKPTTEKRPTKEAAETKETSEEPKTKE) the composition is skewed to basic and acidic residues.

This sequence belongs to the universal ribosomal protein uS2 family.

This chain is Small ribosomal subunit protein uS2, found in Coxiella burnetii (strain Dugway 5J108-111).